The chain runs to 54 residues: Large ribosomal subunit protein bL32c (54 aa).

The span at 1 to 20 shows a compositional bias: basic residues; that stretch reads MAVPKKRVSKSKRDMRKTTW. Positions 1 to 54 are disordered; the sequence is MAVPKKRVSKSKRDMRKTTWKNKASKEAKKALSLAKSVSTGKSKSKGFQIKSSN. Residues 31-42 are compositionally biased toward low complexity; sequence ALSLAKSVSTGK.

Belongs to the bacterial ribosomal protein bL32 family.

It localises to the plastid. It is found in the chloroplast. The protein is Large ribosomal subunit protein bL32c of Chlorokybus atmophyticus (Soil alga).